The primary structure comprises 160 residues: Transcription antitermination protein NusB (160 aa).

It belongs to the NusB family.

In terms of biological role, involved in transcription antitermination. Required for transcription of ribosomal RNA (rRNA) genes. Binds specifically to the boxA antiterminator sequence of the ribosomal RNA (rrn) operons. The sequence is that of Transcription antitermination protein NusB from Nitrobacter hamburgensis (strain DSM 10229 / NCIMB 13809 / X14).